A 111-amino-acid polypeptide reads, in one-letter code: Probable 4-amino-4-deoxy-L-arabinose-phosphoundecaprenol flippase subunit ArnE (111 aa).

The Cytoplasmic portion of the chain corresponds to 1–35; it reads MIWLTLVFASLLSVAGQLCQKQATCFVAINKRRKH. A helical transmembrane segment spans residues 36 to 56; the sequence is IVLWLGLALACLGLAMVLWLL. In terms of domain architecture, EamA spans 40–109; the sequence is LGLALACLGL…IIGGIVILGS (70 aa). The Periplasmic segment spans residues 57-60; the sequence is VLQN. The helical transmembrane segment at 61–81 threads the bilayer; that stretch reads VPVGIAYPMLSLNFVWVTLAA. At 82 to 87 the chain is on the cytoplasmic side; that stretch reads VKLWHE. The chain crosses the membrane as a helical span at residues 88–108; the sequence is PVSPRHWCGVAFIIGGIVILG. Residues 109–111 lie on the Periplasmic side of the membrane; sequence STV.

It belongs to the ArnE family. In terms of assembly, heterodimer of ArnE and ArnF.

The protein resides in the cell inner membrane. Its pathway is bacterial outer membrane biogenesis; lipopolysaccharide biosynthesis. In terms of biological role, translocates 4-amino-4-deoxy-L-arabinose-phosphoundecaprenol (alpha-L-Ara4N-phosphoundecaprenol) from the cytoplasmic to the periplasmic side of the inner membrane. This is Probable 4-amino-4-deoxy-L-arabinose-phosphoundecaprenol flippase subunit ArnE from Escherichia coli (strain ATCC 8739 / DSM 1576 / NBRC 3972 / NCIMB 8545 / WDCM 00012 / Crooks).